The sequence spans 692 residues: Elongation factor G (692 aa).

The region spanning 8–282 (ERTRNIGIMA…AIVYYLPSPV (275 aa)) is the tr-type G domain. GTP-binding positions include 17–24 (AHIDAGKT), 81–85 (DTPGH), and 135–138 (NKMD).

It belongs to the TRAFAC class translation factor GTPase superfamily. Classic translation factor GTPase family. EF-G/EF-2 subfamily.

It is found in the cytoplasm. Its function is as follows. Catalyzes the GTP-dependent ribosomal translocation step during translation elongation. During this step, the ribosome changes from the pre-translocational (PRE) to the post-translocational (POST) state as the newly formed A-site-bound peptidyl-tRNA and P-site-bound deacylated tRNA move to the P and E sites, respectively. Catalyzes the coordinated movement of the two tRNA molecules, the mRNA and conformational changes in the ribosome. In Carboxydothermus hydrogenoformans (strain ATCC BAA-161 / DSM 6008 / Z-2901), this protein is Elongation factor G.